Consider the following 423-residue polypeptide: Polyglutamylase complex subunit TTLL1 (423 aa).

Residues 1–367 (MAGRVKWVTD…NGEIPDCKWN (367 aa)) enclose the TTL domain. Residues K138, 144-145 (QG), 181-184 (SVYI), and 194-196 (KFD) contribute to the ATP site. Position 144 (Q144) interacts with a protein. R220 provides a ligand contact to L-glutamate. Residue 241 to 242 (TN) participates in ATP binding. K259 serves as a coordination point for L-glutamate. D313, E326, and N328 together coordinate Mg(2+). K344 provides a ligand contact to L-glutamate. Positions 390 to 423 (DGAERELRNRPGQPVGPRAGRSRDSGRSVLTTWK) are disordered.

This sequence belongs to the tubulin polyglutamylase family. As to quaternary structure, part of the neuronal tubulin polyglutamylase complex which contains TPGS1, TPGS2, TTLL1, LRRC49 and NICN1. Interacts with PCM1, CSTPP1 and LRRC49. Requires Mg(2+) as cofactor. In terms of tissue distribution, highly expressed in brain, heart and kidney. Expressed in liver, lung, muscle, spleen, testis and trachea. In the brain, expressed in ependymal cilia, cortex, corpus callosum and striatum. Expressed in blastomere.

The protein resides in the cytoplasm. It is found in the cytoskeleton. The protein localises to the cilium basal body. Its subcellular location is the cilium axoneme. It localises to the cell projection. The protein resides in the cilium. It is found in the flagellum. It catalyses the reaction (L-glutamyl)(n)-gamma-L-glutamyl-L-glutamyl-[protein] + L-glutamate + ATP = (L-glutamyl)(n+1)-gamma-L-glutamyl-L-glutamyl-[protein] + ADP + phosphate + H(+). In terms of biological role, catalytic subunit of a polyglutamylase complex which modifies tubulin, generating side chains of glutamate on the gamma-carboxyl group of specific glutamate residues within the C-terminal tail of tubulin. Probably involved in the side-chain elongation step of the polyglutamylation reaction rather than the initiation step. Modifies both alpha- and beta-tubulins with a preference for the alpha-tail. Unlike most polyglutamylases of the tubulin--tyrosine ligase family, only displays a catalytic activity when in complex with other proteins as it is most likely lacking domains important for autonomous activity. Part of the neuronal tubulin polyglutamylase complex. Mediates cilia and flagella polyglutamylation which is essential for their biogenesis and motility. Involved in respiratory motile cilia function through the regulation of beating asymmetry. Essential for sperm flagella biogenesis, motility and male fertility. Also mediates glutamylation of non-tubulin proteins. Involved in KLF4 glutamylation which impedes its ubiquitination, thereby leading to somatic cell reprogramming, pluripotency maintenance and embryogenesis. The sequence is that of Polyglutamylase complex subunit TTLL1 from Mus musculus (Mouse).